Reading from the N-terminus, the 845-residue chain is Protein P (845 aa).

Residues 1–179 (MPLSYQHFLK…FCGSPYSWEQ (179 aa)) are terminal protein domain (TP). The tract at residues 180-348 (ELHHGRLVTK…YCLSHLVNLL (169 aa)) is spacer. Disordered regions lie at residues 188–211 (TKTS…SRSS) and 288–317 (YSHL…ARSQ). Polar residues-rich tracts occupy residues 199-211 (VCSQ…SRSS) and 290-301 (HLSTSKRQSSSG). Positions 349–692 (EDWGPCTDHG…YMNLYPVARQ (344 aa)) are polymerase/reverse transcriptase domain (RT). Positions 359–602 (EHHIRIPRTP…YSLNFMGYII (244 aa)) constitute a Reverse transcriptase domain. 3 residues coordinate Mg(2+): Asp-431, Asp-553, and Asp-554.

It belongs to the hepadnaviridae P protein family.

The enzyme catalyses DNA(n) + a 2'-deoxyribonucleoside 5'-triphosphate = DNA(n+1) + diphosphate. It catalyses the reaction Endonucleolytic cleavage to 5'-phosphomonoester.. Its activity is regulated as follows. Activated by host HSP70 and HSP40 in vitro to be able to bind the epsilon loop of the pgRNA. Because deletion of the RNase H region renders the protein partly chaperone-independent, the chaperones may be needed indirectly to relieve occlusion of the RNA-binding site by this domain. Inhibited by several reverse-transcriptase inhibitors: Lamivudine, Adefovir and Entecavir. Its function is as follows. Multifunctional enzyme that converts the viral RNA genome into dsDNA in viral cytoplasmic capsids. This enzyme displays a DNA polymerase activity that can copy either DNA or RNA templates, and a ribonuclease H (RNase H) activity that cleaves the RNA strand of RNA-DNA heteroduplexes in a partially processive 3'- to 5'-endonucleasic mode. Neo-synthesized pregenomic RNA (pgRNA) are encapsidated together with the P protein, and reverse-transcribed inside the nucleocapsid. Initiation of reverse-transcription occurs first by binding the epsilon loop on the pgRNA genome, and is initiated by protein priming, thereby the 5'-end of (-)DNA is covalently linked to P protein. Partial (+)DNA is synthesized from the (-)DNA template and generates the relaxed circular DNA (RC-DNA) genome. After budding and infection, the RC-DNA migrates in the nucleus, and is converted into a plasmid-like covalently closed circular DNA (cccDNA). The activity of P protein does not seem to be necessary for cccDNA generation, and is presumably released from (+)DNA by host nuclear DNA repair machinery. The protein is Protein P of Homo sapiens (Human).